Reading from the N-terminus, the 191-residue chain is Inosine triphosphate pyrophosphatase (191 aa).

Position 12 to 17 (12 to 17) interacts with ITP; that stretch reads TGNANK. Residue E42 coordinates Mg(2+). ITP contacts are provided by residues K54, 70–71, K87, 145–148, K168, and 173–174; these read DT, FGWD, and HR.

Belongs to the HAM1 NTPase family. Homodimer. It depends on Mg(2+) as a cofactor. Mn(2+) is required as a cofactor.

The protein resides in the cytoplasm. It carries out the reaction ITP + H2O = IMP + diphosphate + H(+). The enzyme catalyses dITP + H2O = dIMP + diphosphate + H(+). The catalysed reaction is XTP + H2O = XMP + diphosphate + H(+). Pyrophosphatase that hydrolyzes non-canonical purine nucleotides such as inosine triphosphate (ITP), deoxyinosine triphosphate (dITP) or xanthosine 5'-triphosphate (XTP) to their respective monophosphate derivatives. The enzyme does not distinguish between the deoxy- and ribose forms. Probably excludes non-canonical purines from RNA and DNA precursor pools, thus preventing their incorporation into RNA and DNA and avoiding chromosomal lesions. This Phytophthora infestans (strain T30-4) (Potato late blight agent) protein is Inosine triphosphate pyrophosphatase.